Reading from the N-terminus, the 306-residue chain is Probable zinc metalloprotease VDBG_06923 (306 aa).

Residues 1–28 (MNYEAEQPGANDDASGVAVALELARVLA) form the signal peptide. 2 residues coordinate Zn(2+): Asp-12 and Glu-45. Asn-60 carries an N-linked (GlcNAc...) asparagine glycan. Zn(2+) is bound at residue Asp-72. The Fibronectin type-III domain occupies 218-306 (APAKVNNVRV…KSPVTIPFPT (89 aa)). N-linked (GlcNAc...) asparagine glycans are attached at residues Asn-228, Asn-234, and Asn-244.

The protein belongs to the peptidase M28 family. M28B subfamily. The cofactor is Zn(2+).

The protein localises to the secreted. This is Probable zinc metalloprotease VDBG_06923 from Verticillium alfalfae (strain VaMs.102 / ATCC MYA-4576 / FGSC 10136) (Verticillium wilt of alfalfa).